Consider the following 266-residue polypeptide: CD82 antigen (266 aa).

At 1 to 11 (MGAGCVKVTKY) the chain is on the cytoplasmic side. Cys5 carries the S-palmitoyl cysteine lipid modification. A helical membrane pass occupies residues 12 to 32 (FLFLFNLLFFILGAVILGFGV). The Extracellular portion of the chain corresponds to 33–53 (WILADKSSFISVLQTSSSSLQ). A helical membrane pass occupies residues 54 to 72 (VGAYVFIGVGAITMLMGFL). Residues 73 to 83 (GCIGAVNEVRC) are Cytoplasmic-facing. Residue Cys74 is the site of S-palmitoyl cysteine attachment. Residues 84–110 (LLGLYFVFLLLILIAQVTVEVLFYFNA) traverse the membrane as a helical segment. At 111 to 227 (NKLKQEMGNT…KAQAWLQENF (117 aa)) the chain is on the extracellular side. N-linked (GlcNAc...) asparagine glycans are attached at residues Asn127, Asn131, Asn157, Asn166, and Asn197. A helical transmembrane segment spans residues 228 to 249 (GILLGVCAGVAVIELLGLFLSI). The Cytoplasmic portion of the chain corresponds to 250–266 (CLCRYIHSEDYSKVPKY).

This sequence belongs to the tetraspanin (TM4SF) family. Forms homooligomers. Interacts directly with IGSF8. Interacts with EGFR. Interacts with VEGFA and PDGFA. Interacts with ITGA4. Interacts with ITGA6; this interaction reduces ITGA6 cell surface expression. Interacts with ITGB1. Interacts with TLR4; this interaction inhibits TLR4-mediated signaling pathway. Interacts with TLR9. Interacts with PLAUR. Palmitoylated. Palmitoylation contributes to oligomerization and surface expression.

It is found in the cell membrane. In terms of biological role, structural component of specialized membrane microdomains known as tetraspanin-enriched microdomains (TERMs), which act as platforms for receptor clustering and signaling. Participates thereby in diverse biological functions such as cell signal transduction, adhesion, migration and protein trafficking. Acts as a attenuator of EGF signaling, facilitating ligand-induced endocytosis of the receptor and its subsequent desensitization. Mechanistically, modulates ligand-induced ubiquitination and trafficking of EGFR via E3 ligase CBL phosphorylation by PKC. Increases cell-matrix adhesion by regulating the membrane organization of integrin alpha4/ITA4. Modulates adhesion and suppresses cell migration through other integrins such as the alpha6/ITGA6 and beta1/ITGB1. Decreases cell-associated plasminogen activation by interfering with the interaction between urokinase-type plasminogen activator/PLAU and its receptor PLAUR. Associates with CD4 or CD8 and delivers costimulatory signals for the TCR/CD3 pathway. Plays a role in the restrains phagocyte migration but supports macrophage activation. Plays a role in TLR9 trafficking to acidified CpG-containing compartments by controlling interaction between TLR9 and VAMP3 and subsequent myddosome assembly. Inhibits LPS-induced inflammatory response by preventing binding of LPS to TLR4 on the cell surface. Plays a role in the activation of macrophages into anti-inflammatory phenotypes. Independently of Toll-like receptor (TLR) signaling, is recruited to pathogen-containing phagosomes prior to fusion with lysosomes and participates in antigen presentation. Also acts to control angiogenesis and switch angiogenic milieu to quiescent state by binding and sequestering VEGFA and PDGFA to inhibit the signaling they trigger via their respective cell surface receptor. This chain is CD82 antigen (Cd82), found in Rattus norvegicus (Rat).